A 209-amino-acid chain; its full sequence is Glycerol-3-phosphate acyltransferase (209 aa).

5 helical membrane passes run 8 to 28 (NVLF…YILA), 78 to 98 (VLVL…LIGI), 124 to 144 (VLLV…LIVA), 149 to 169 (ISSL…FIVH), and 170 to 190 (PDMP…IIFY).

It belongs to the PlsY family. In terms of assembly, probably interacts with PlsX.

Its subcellular location is the cell inner membrane. It catalyses the reaction an acyl phosphate + sn-glycerol 3-phosphate = a 1-acyl-sn-glycero-3-phosphate + phosphate. It participates in lipid metabolism; phospholipid metabolism. Functionally, catalyzes the transfer of an acyl group from acyl-phosphate (acyl-PO(4)) to glycerol-3-phosphate (G3P) to form lysophosphatidic acid (LPA). This enzyme utilizes acyl-phosphate as fatty acyl donor, but not acyl-CoA or acyl-ACP. This chain is Glycerol-3-phosphate acyltransferase, found in Nitratiruptor sp. (strain SB155-2).